A 522-amino-acid polypeptide reads, in one-letter code: Zinc finger protein C25B8.19c (522 aa).

Disordered stretches follow at residues 1 to 25 (MSSDNTPSINRRNNENPPQSSLPTT), 61 to 96 (DPQAATVSESANVSRPTPAPVPPAGNTNTPTTSNSN), 235 to 265 (QRQSSEAAEQPSSKNNTSGANPPSSNNQEVT), 311 to 386 (QPSS…HTLS), and 413 to 462 (NSAQ…STSS). Over residues 84-96 (AGNTNTPTTSNSN) the composition is skewed to low complexity. Polar residues-rich tracts occupy residues 311 to 321 (QPSSRDLQNHP) and 335 to 344 (ASNTLNHANG). Residues 345 to 362 (NQAENASESSTSQSNDSQ) are compositionally biased toward low complexity. Positions 413 to 427 (NSAQAHPMGQQSDSN) are enriched in polar residues. Residues 428–438 (YSDHHNNDKRA) show a composition bias toward basic and acidic residues. The segment covering 453–462 (SHTGSSSTSS) has biased composition (low complexity). 2 C2H2-type zinc fingers span residues 468–495 (YRCTECLQGFSRPSSLKIHTYSHTGERP) and 496–522 (FVCDYAGCGKAFNVRSNMRRHQRIHGL).

The protein localises to the nucleus. In Schizosaccharomyces pombe (strain 972 / ATCC 24843) (Fission yeast), this protein is Zinc finger protein C25B8.19c.